We begin with the raw amino-acid sequence, 213 residues long: Thymidylate kinase (213 aa).

10–17 provides a ligand contact to ATP; that stretch reads GLEGAGKT.

The protein belongs to the thymidylate kinase family.

It catalyses the reaction dTMP + ATP = dTDP + ADP. In terms of biological role, phosphorylation of dTMP to form dTDP in both de novo and salvage pathways of dTTP synthesis. This Klebsiella pneumoniae (strain 342) protein is Thymidylate kinase.